A 940-amino-acid polypeptide reads, in one-letter code: Mating-type protein A-alpha Z4 (940 aa).

A DNA-binding region (homeobox; TALE-type) is located at residues 110–182 (GAELSATPLP…AARARMGWGD (73 aa)). Disordered regions lie at residues 333-618 (KQRQ…TGDP), 633-762 (PRDL…GLRP), 832-863 (GQKAGNARRRTTPVQRRVTPKAQETSEPSSLV), and 877-912 (EAPKPAKAPKNDRRYLERRERRLSKSSPVDSADTVR). Residues 337–360 (ARREQRRAQKDRMDAQRRAEDRKC) are compositionally biased toward basic and acidic residues. Composition is skewed to acidic residues over residues 376–400 (ESDEDLDDFYASDDASDDEDDDGED) and 427–469 (ATED…EEEE). 3 stretches are compositionally biased toward low complexity: residues 516 to 531 (PSSRGSTPTSPVSPSP), 582 to 611 (VRSRSSPSVSSPPSVSVSLPLPSRGVPSGG), and 657 to 693 (SRSLTRSPSISSISSACSTSSSGSDTDSLFSVTSDAT). Residues 694–703 (DITEPDEATT) are compositionally biased toward acidic residues. Low complexity predominate over residues 704–724 (ADETTTQSTSASSSRDTTSQQ). Basic and acidic residues predominate over residues 877–896 (EAPKPAKAPKNDRRYLERRE).

The protein belongs to the TALE/M-ATYP homeobox family.

Its subcellular location is the nucleus. Its function is as follows. Specifies A-alpha-4 mating-type. May regulate the expression of genes specific to the homokaryotic cell type. The sequence is that of Mating-type protein A-alpha Z4 from Schizophyllum commune (Split gill fungus).